The following is a 401-amino-acid chain: Argininosuccinate synthase (401 aa).

8–16 (AYSGGLDTS) is a binding site for ATP. Y85 lines the L-citrulline pocket. Position 115 (G115) interacts with ATP. Residues T117, N121, and D122 each contribute to the L-aspartate site. Position 121 (N121) interacts with L-citrulline. Residues R125, S173, E258, and Y270 each coordinate L-citrulline.

The protein belongs to the argininosuccinate synthase family. Type 1 subfamily. As to quaternary structure, homotetramer.

It is found in the cytoplasm. The catalysed reaction is L-citrulline + L-aspartate + ATP = 2-(N(omega)-L-arginino)succinate + AMP + diphosphate + H(+). It functions in the pathway amino-acid biosynthesis; L-arginine biosynthesis; L-arginine from L-ornithine and carbamoyl phosphate: step 2/3. This Staphylococcus aureus (strain MSSA476) protein is Argininosuccinate synthase.